The primary structure comprises 427 residues: Inward rectifier potassium channel 2 (427 aa).

The Cytoplasmic portion of the chain corresponds to 1 to 81; that stretch reads MGSVRTNRYS…IFTTCVDIRW (81 aa). C76 carries the post-translational modification S-nitrosocysteine. A helical transmembrane segment spans residues 82-106; it reads RWMLVIFCLAFVLSWLFFGCVFWLI. The Extracellular segment spans residues 107-128; the sequence is ALLHGDLDASKESKACVSEVNS. An intramembrane region (helical; Pore-forming) is located at residues 129–140; the sequence is FTAAFLFSIETQ. An intramembrane region (pore-forming) is located at residues 141 to 147; sequence TTIGYGF. The short motif at 142–147 is the Selectivity filter element; that stretch reads TIGYGF. Residues 148–156 are Extracellular-facing; the sequence is RCVTDECPV. The chain crosses the membrane as a helical span at residues 157–178; the sequence is AVFMVVFQSIVGCIIDAFIIGA. Residues 179–427 lie on the Cytoplasmic side of the membrane; that stretch reads VMAKMAKPKK…PRPLRRESEI (249 aa). The interval 181–208 is polyphosphoinositide (PIP2)-binding; the sequence is AKMAKPKKRNETLVFSHNAVIAMRDGKL. The interval 384-427 is disordered; that stretch reads SKEEDDSENGVPESTSTDTPPDLDLHNQASVPLEPRPLRRESEI. A PDZ-binding motif is present at residues 425–427; that stretch reads SEI.

This sequence belongs to the inward rectifier-type potassium channel (TC 1.A.2.1) family. KCNJ2 subfamily. As to quaternary structure, homotetramer. Homomultimeric and heteromultimeric association with KCNJ4/Kir2.3. Can form heteromeric channels with Kir2.6/KCNJ18. Associates, via its PDZ-recognition domain, with a complex containing LIN7A, LIN7B, LIN7C, DLG1, CASK and APBA1. S-nitrosylation increases the open probability and inward rectifying currents.

Its subcellular location is the cell membrane. It is found in the sarcolemma. It localises to the T-tubule. The enzyme catalyses K(+)(in) = K(+)(out). Activated by phosphatidylinositol 4,5 biphosphate (PtdIns(4,5)P2). Its function is as follows. Inward rectifier potassium channels are characterized by a greater tendency to allow potassium to flow into the cell rather than out of it. Their voltage dependence is regulated by the concentration of extracellular potassium; as external potassium is raised, the voltage range of the channel opening shifts to more positive voltages. The inward rectification is mainly due to the blockage of outward current by internal magnesium. Blocked by external barium or cesium. Probably participates in establishing action potential waveform and excitability of neuronal and muscle tissues. This chain is Inward rectifier potassium channel 2 (KCNJ2), found in Canis lupus familiaris (Dog).